Consider the following 235-residue polypeptide: 2-C-methyl-D-erythritol 4-phosphate cytidylyltransferase (235 aa).

The protein belongs to the IspD/TarI cytidylyltransferase family. IspD subfamily.

It carries out the reaction 2-C-methyl-D-erythritol 4-phosphate + CTP + H(+) = 4-CDP-2-C-methyl-D-erythritol + diphosphate. The protein operates within isoprenoid biosynthesis; isopentenyl diphosphate biosynthesis via DXP pathway; isopentenyl diphosphate from 1-deoxy-D-xylulose 5-phosphate: step 2/6. Functionally, catalyzes the formation of 4-diphosphocytidyl-2-C-methyl-D-erythritol from CTP and 2-C-methyl-D-erythritol 4-phosphate (MEP). This Mycolicibacterium paratuberculosis (strain ATCC BAA-968 / K-10) (Mycobacterium paratuberculosis) protein is 2-C-methyl-D-erythritol 4-phosphate cytidylyltransferase.